We begin with the raw amino-acid sequence, 238 residues long: MRSDGRNPASLRNIRITRKYLKHAEGSVLVEFGDTKVLCTASVEESVPPFLRGKGGGWVTAEYSMLPRATHTRSPREAAKGKLGGRTHEIQRLIGRSLRAVTDLTLLGERSVLIDCDVLQADGGTRTASITGAYVALVDAFQWLVSQGTIATLPVREAVAAVSVGIVGGEVLLDLNYIEDSRADVDMNFVMTSSGRFVEVQGTAEAEPFTCAQMDDMRSLAMIGIERLMAIQQEVLEQ.

Residues R86 and 124-126 (GTR) contribute to the phosphate site.

It belongs to the RNase PH family. In terms of assembly, homohexameric ring arranged as a trimer of dimers.

It catalyses the reaction tRNA(n+1) + phosphate = tRNA(n) + a ribonucleoside 5'-diphosphate. Its function is as follows. Phosphorolytic 3'-5' exoribonuclease that plays an important role in tRNA 3'-end maturation. Removes nucleotide residues following the 3'-CCA terminus of tRNAs; can also add nucleotides to the ends of RNA molecules by using nucleoside diphosphates as substrates, but this may not be physiologically important. Probably plays a role in initiation of 16S rRNA degradation (leading to ribosome degradation) during starvation. The sequence is that of Ribonuclease PH from Geobacter sulfurreducens (strain ATCC 51573 / DSM 12127 / PCA).